The sequence spans 934 residues: Isoleucine--tRNA ligase (934 aa).

The short motif at proline 58–histidine 68 is the 'HIGH' region element. L-isoleucyl-5'-AMP is bound at residue glutamate 559. Positions lysine 600–serine 604 match the 'KMSKS' region motif. Lysine 603 is a binding site for ATP. Zn(2+) contacts are provided by cysteine 897, cysteine 900, cysteine 917, and cysteine 920.

This sequence belongs to the class-I aminoacyl-tRNA synthetase family. IleS type 1 subfamily. Monomer. It depends on Zn(2+) as a cofactor.

The protein localises to the cytoplasm. It carries out the reaction tRNA(Ile) + L-isoleucine + ATP = L-isoleucyl-tRNA(Ile) + AMP + diphosphate. Functionally, catalyzes the attachment of isoleucine to tRNA(Ile). As IleRS can inadvertently accommodate and process structurally similar amino acids such as valine, to avoid such errors it has two additional distinct tRNA(Ile)-dependent editing activities. One activity is designated as 'pretransfer' editing and involves the hydrolysis of activated Val-AMP. The other activity is designated 'posttransfer' editing and involves deacylation of mischarged Val-tRNA(Ile). This is Isoleucine--tRNA ligase from Teredinibacter turnerae (strain ATCC 39867 / T7901).